Here is a 183-residue protein sequence, read N- to C-terminus: Probable GTP-binding protein EngB (183 aa).

The 167-residue stretch at Asp17–Asn183 folds into the EngB-type G domain. GTP-binding positions include Gly25–Ser32, Gly51–Ala55, Asp69–Gly72, Thr137–Asp140, and Ser166–Ala168. Mg(2+)-binding residues include Ser32 and Thr53.

The protein belongs to the TRAFAC class TrmE-Era-EngA-EngB-Septin-like GTPase superfamily. EngB GTPase family. Requires Mg(2+) as cofactor.

Necessary for normal cell division and for the maintenance of normal septation. In Aquifex aeolicus (strain VF5), this protein is Probable GTP-binding protein EngB.